We begin with the raw amino-acid sequence, 904 residues long: Protein argonaute 4A (904 aa).

Disordered stretches follow at residues 1–33 (MESNSGEIEELPPPPPLPPNAEPIKTDDTKKLS) and 143–166 (KSSANGGSPGNDSPGNDRKRVRRP). Residues 11–21 (LPPPPPLPPNA) are compositionally biased toward pro residues. Low complexity predominate over residues 144 to 156 (SSANGGSPGNDSP). In terms of domain architecture, PAZ spans 274–388 (PVVDFLLANQ…FPIELCSLVP (115 aa)). Positions 557 to 865 (FLLCVLAERK…AAAQVSQFIK (309 aa)) constitute a Piwi domain. The tract at residues 871–890 (ETSSSHGGHTSAGSAPVPEL) is disordered. A compositionally biased stretch (low complexity) spans 872–885 (TSSSHGGHTSAGSA).

Belongs to the argonaute family. Ago subfamily.

Its function is as follows. Probably involved in the RNA silencing pathway. May bind to short RNAs such as microRNAs (miRNAs) or short interfering RNAs (siRNAs), and represses the translation of mRNAs which are complementary to them. This is Protein argonaute 4A (AGO4A) from Oryza sativa subsp. japonica (Rice).